Here is a 306-residue protein sequence, read N- to C-terminus: Pseudouridine-5'-phosphate glycosidase (306 aa).

Catalysis depends on glutamate 28, which acts as the Proton donor. Residues lysine 89 and valine 109 each coordinate substrate. Residue aspartate 139 participates in Mn(2+) binding. A substrate-binding site is contributed by 141-143 (SAD). Lysine 160 functions as the Nucleophile in the catalytic mechanism.

The protein belongs to the pseudouridine-5'-phosphate glycosidase family. In terms of assembly, homotrimer. Requires Mn(2+) as cofactor.

It catalyses the reaction D-ribose 5-phosphate + uracil = psi-UMP + H2O. Catalyzes the reversible cleavage of pseudouridine 5'-phosphate (PsiMP) to ribose 5-phosphate and uracil. Functions biologically in the cleavage direction, as part of a pseudouridine degradation pathway. This Gemmatimonas aurantiaca (strain DSM 14586 / JCM 11422 / NBRC 100505 / T-27) protein is Pseudouridine-5'-phosphate glycosidase.